A 180-amino-acid polypeptide reads, in one-letter code: GTP cyclohydrolase 1 (180 aa).

Zn(2+)-binding residues include C71, H74, and C142.

Belongs to the GTP cyclohydrolase I family. In terms of assembly, toroid-shaped homodecamer, composed of two pentamers of five dimers.

The enzyme catalyses GTP + H2O = 7,8-dihydroneopterin 3'-triphosphate + formate + H(+). The protein operates within cofactor biosynthesis; 7,8-dihydroneopterin triphosphate biosynthesis; 7,8-dihydroneopterin triphosphate from GTP: step 1/1. The sequence is that of GTP cyclohydrolase 1 from Helicobacter acinonychis (strain Sheeba).